The following is a 498-amino-acid chain: MRINPTTSGPGVSTLEEKNLGRIAQIIGPVLDVAFPPGKMPNIYNALIVKGRDTVDQQINVTCEVQQLLGNNRVRAVAMSATDGLTRGMEVIDTGAPLSVPVGGATLGRIFNVLGEPIDNLGPADTRTTSPIHRSAPAFIQLDTKLSIFETGIKVVDLLAPYRRGGKIGLFGGAGVGKTVLIMELINNIAKAHGGVSVFGGVGERTREGNDLYMEMKESGVINEENIAESKVALVYGQMNEPPGARMRVGLTALTMAEYFRDVNEQDVLLFIDNIFRFVQAGSEVSALLGRMPSAVGYQPTLSTEMGSLQERITSTKEGSITSIQAVYVPADDLTDPAPATTFAHLDATTVLSRGLAAKGIYPAVDPLDSTSTMLQPRIVGEEHYETAQRVKQTSQRYKELQDIIAILGLDELSEEDRLTVARARKIERFLSQPFFVAEVFTGSPGKYVGLAETIRGFQLILSGELDGLPEQAFYLVGNIDEATAKAMNLDVESKLKK.

172-179 is a binding site for ATP; it reads GGAGVGKT.

It belongs to the ATPase alpha/beta chains family. As to quaternary structure, F-type ATPases have 2 components, CF(1) - the catalytic core - and CF(0) - the membrane proton channel. CF(1) has five subunits: alpha(3), beta(3), gamma(1), delta(1), epsilon(1). CF(0) has four main subunits: a(1), b(1), b'(1) and c(9-12).

It is found in the plastid. Its subcellular location is the chloroplast thylakoid membrane. It catalyses the reaction ATP + H2O + 4 H(+)(in) = ADP + phosphate + 5 H(+)(out). In terms of biological role, produces ATP from ADP in the presence of a proton gradient across the membrane. The catalytic sites are hosted primarily by the beta subunits. The sequence is that of ATP synthase subunit beta, chloroplastic from Canella winterana (Wild cinnamon).